The chain runs to 693 residues: MAREFSLAKTRNIGIMAHVDAGKTTTTERILYYTGKIHKIGETHEGASQMDWMEQEQERGITITSAATTAQWNGHRVNIIDTPGHVDFTIEVQRSLRVLDGAVTVLDSQSGVEPQTETVWRQATEYGVPRIVFANKMDKIGADFLYSVSTLHDRLQANAHPIQLPIGAEDDFRGIIDLIKMKAEIYTNDLGTDILEEDIPAEYVDQANEYREKLIEAVAETDEDLMMKYLEGEEITNDELKAAIRRATINVEFFPVLCGSAFKNKGVQLMLDAVIDYLPSPLDIPAIKGINPDTGEEETRPASDEAPFAALAFKIMTDPFVGRLTFIRVYSGILQSGSYVMNTSKGKRERIGRILQMHANSRQEIEQVYAGDIAAAIGLKDTTTGDSLTDEKAKVILESIEVPEPVIQLMVEPKTKADQDKMAIGLQKLAEEDPTFRVETNPETGETVISGMGELHLDVLVDRLKREHKVEANVGAPQVSYRETFRAATQARGFFKRQSGGKGQFGDVWIEFTPNEEGKGFEFENAIVGGVVPREFIPAVEKGLEESMANGVLAGYPMVDIKAKLYDGSYHDVDSSETAFKIAASLALKEAAKTAQPTILEPMMLVTITVPEENLGDVMGHVTARRGRVDGMEAHGNTQIVRAYVPLAEMFGYATTLRSATQGRGTFMMVFDHYEDVPKSVQEEIIKKNSGEA.

The tr-type G domain maps to 8–282 (AKTRNIGIMA…AVIDYLPSPL (275 aa)). GTP is bound by residues 17–24 (AHVDAGKT), 81–85 (DTPGH), and 135–138 (NKMD).

It belongs to the TRAFAC class translation factor GTPase superfamily. Classic translation factor GTPase family. EF-G/EF-2 subfamily.

The protein resides in the cytoplasm. In terms of biological role, catalyzes the GTP-dependent ribosomal translocation step during translation elongation. During this step, the ribosome changes from the pre-translocational (PRE) to the post-translocational (POST) state as the newly formed A-site-bound peptidyl-tRNA and P-site-bound deacylated tRNA move to the P and E sites, respectively. Catalyzes the coordinated movement of the two tRNA molecules, the mRNA and conformational changes in the ribosome. In Streptococcus thermophilus (strain CNRZ 1066), this protein is Elongation factor G.